Consider the following 269-residue polypeptide: Eukaryotic translation initiation factor 3 subunit G-2 (269 aa).

Positions 189 to 267 constitute an RRM domain; sequence SAVRISNLSE…LILCVEWSKP (79 aa).

It belongs to the eIF-3 subunit G family. Component of the eukaryotic translation initiation factor 3 (eIF-3) complex. The eIF-3 complex interacts with pix.

Its subcellular location is the cytoplasm. In terms of biological role, RNA-binding component of the eukaryotic translation initiation factor 3 (eIF-3) complex, which is involved in protein synthesis of a specialized repertoire of mRNAs and, together with other initiation factors, stimulates binding of mRNA and methionyl-tRNAi to the 40S ribosome. The eIF-3 complex specifically targets and initiates translation of a subset of mRNAs involved in cell proliferation. This subunit can bind 18S rRNA. The polypeptide is Eukaryotic translation initiation factor 3 subunit G-2 (Drosophila ananassae (Fruit fly)).